We begin with the raw amino-acid sequence, 142 residues long: Transcription antitermination protein NusB (142 aa).

The protein belongs to the NusB family.

In terms of biological role, involved in transcription antitermination. Required for transcription of ribosomal RNA (rRNA) genes. Binds specifically to the boxA antiterminator sequence of the ribosomal RNA (rrn) operons. The sequence is that of Transcription antitermination protein NusB from Streptomyces coelicolor (strain ATCC BAA-471 / A3(2) / M145).